An 880-amino-acid chain; its full sequence is Kinesin heavy chain (880 aa).

Positions Ser4–Ile327 constitute a Kinesin motor domain. ATP contacts are provided by residues Gly85–Ser92 and Gly235–Thr242. The segment at Val388–Ile426 is disordered. A compositionally biased stretch (polar residues) spans Pro399–Ala408. Residues Ile428 to Arg849 are a coiled coil.

The protein belongs to the TRAFAC class myosin-kinesin ATPase superfamily. Kinesin family. Kinesin subfamily.

It is found in the cytoplasm. The protein resides in the cytoskeleton. In terms of biological role, kinesin is a microtubule-associated force-producing protein that may play a role in organelle transport. Its motor activity is directed toward the microtubule's plus end. This Botryotinia fuckeliana (Noble rot fungus) protein is Kinesin heavy chain (klp1).